Reading from the N-terminus, the 149-residue chain is uncharacterized protein (149 aa).

Positions 111–140 form a coiled coil; the sequence is HKALEKATELIENEEELLKREGIKRENLKF.

This is an uncharacterized protein from Aquifex aeolicus (strain VF5).